Here is a 473-residue protein sequence, read N- to C-terminus: MKTDTSTFLAQQIVRLRRRDQIRRLMQRDKTPLAILFMAAVVGTLTGLVGVAFEKAVSWVQNMRIGALVQVADHAFLLWPLAFILSALLAMVGYFLVRKFAPEAGGSGIPEIEGALEELRPVRWWRVLPVKFIGGMGTLGAGMVLGREGPTVQIGGNLGRMVLDVFRMRSAEARHTLLATGAAAGLSAAFNAPLAGILFIIEEMRPQFRYNLISIKAVFTGVIMSSIVFRIFNGEAPIIEVGKLSDAPVNTLWLYLILGIIFGCVGPVFNSLVLRTQDMFQRFHGGEIKKWVLMGGAIGGLCGILGLIEPEAAGGGFNLIPIAAAGNFSVGLLLFIFIARVVTTLLCFSSGAPGGIFAPMLALGTLLGTAFGMAAAVLFPQYHLEAGTFAIAGMGALMAASVRAPLTGIVLVLEMTDNYQLILPMIITCLGATLLAQFLGGKPLYSTILARTLAKQDAEQAAKNQNAPAGENT.

Over 1–32 the chain is Cytoplasmic; that stretch reads MKTDTSTFLAQQIVRLRRRDQIRRLMQRDKTP. The chain crosses the membrane as a helical span at residues 33–69; sequence LAILFMAAVVGTLTGLVGVAFEKAVSWVQNMRIGALV. The Periplasmic segment spans residues 70-76; it reads QVADHAF. A helical transmembrane segment spans residues 77 to 100; it reads LLWPLAFILSALLAMVGYFLVRKF. The Selectivity filter part_1 signature appears at 106–110; sequence GSGIP. Position 107 (serine 107) interacts with chloride. The helical intramembrane region spans 109-116; it reads IPEIEGAL. Over 117 to 123 the chain is Cytoplasmic; the sequence is EELRPVR. 2 consecutive transmembrane segments (helical) span residues 124-141 and 148-166; these read WWRV…TLGA and EGPT…LDVF. The short motif at 146–150 is the Selectivity filter part_2 element; that stretch reads GREGP. The Cytoplasmic segment spans residues 167–176; it reads RMRSAEARHT. Intramembrane regions (helical) lie at residues 177-189 and 193-201; these read LLAT…LSAA and PLAGILFII. Over 202-214 the chain is Cytoplasmic; the sequence is EEMRPQFRYNLIS. A helical transmembrane segment spans residues 215 to 232; sequence IKAVFTGVIMSSIVFRIF. Topologically, residues 233-252 are periplasmic; it reads NGEAPIIEVGKLSDAPVNTL. The chain crosses the membrane as a helical span at residues 253–281; it reads WLYLILGIIFGCVGPVFNSLVLRTQDMFQ. Residues 282–287 are Cytoplasmic-facing; the sequence is RFHGGE. Residues 288-309 form a helical membrane-spanning segment; the sequence is IKKWVLMGGAIGGLCGILGLIE. Residues 310 to 329 lie on the Periplasmic side of the membrane; the sequence is PEAAGGGFNLIPIAAAGNFS. The next 2 helical transmembrane spans lie at 330-349 and 355-376; these read VGLL…LCFS and GIFA…MAAA. The short motif at 355–359 is the Selectivity filter part_3 element; it reads GIFAP. Positions 356 and 357 each coordinate chloride. Over 377 to 386 the chain is Periplasmic; that stretch reads VLFPQYHLEA. An intramembrane region (helical) is located at residues 387–401; the sequence is GTFAIAGMGALMAAS. Residues 402 to 404 constitute an intramembrane region (note=Loop between two helices); it reads VRA. The segment at residues 405–416 is an intramembrane region (helical); that stretch reads PLTGIVLVLEMT. An intramembrane region (note=Loop between two helices) is located at residues 417 to 421; that stretch reads DNYQL. The helical transmembrane segment at 422–438 threads the bilayer; that stretch reads ILPMIITCLGATLLAQF. Over 439–473 the chain is Cytoplasmic; the sequence is LGGKPLYSTILARTLAKQDAEQAAKNQNAPAGENT. Position 445 (tyrosine 445) interacts with chloride.

The protein belongs to the chloride channel (TC 2.A.49) family. ClcA subfamily. As to quaternary structure, homodimer.

The protein resides in the cell inner membrane. The catalysed reaction is 2 chloride(in) + H(+)(out) = 2 chloride(out) + H(+)(in). Its function is as follows. Proton-coupled chloride transporter. Functions as antiport system and exchanges two chloride ions for 1 proton. Probably acts as an electrical shunt for an outwardly-directed proton pump that is linked to amino acid decarboxylation, as part of the extreme acid resistance (XAR) response. This Salmonella agona (strain SL483) protein is H(+)/Cl(-) exchange transporter ClcA.